A 156-amino-acid polypeptide reads, in one-letter code: 6,7-dimethyl-8-ribityllumazine synthase (156 aa).

5-amino-6-(D-ribitylamino)uracil is bound by residues phenylalanine 22, 57-59, and 81-83; these read AYE and TVI. 86–87 contributes to the (2S)-2-hydroxy-3-oxobutyl phosphate binding site; sequence GT. Histidine 89 acts as the Proton donor in catalysis. Position 114 (phenylalanine 114) interacts with 5-amino-6-(D-ribitylamino)uracil. Position 128 (arginine 128) interacts with (2S)-2-hydroxy-3-oxobutyl phosphate.

This sequence belongs to the DMRL synthase family. In terms of assembly, forms an icosahedral capsid composed of 60 subunits, arranged as a dodecamer of pentamers.

The enzyme catalyses (2S)-2-hydroxy-3-oxobutyl phosphate + 5-amino-6-(D-ribitylamino)uracil = 6,7-dimethyl-8-(1-D-ribityl)lumazine + phosphate + 2 H2O + H(+). The protein operates within cofactor biosynthesis; riboflavin biosynthesis; riboflavin from 2-hydroxy-3-oxobutyl phosphate and 5-amino-6-(D-ribitylamino)uracil: step 1/2. In terms of biological role, catalyzes the formation of 6,7-dimethyl-8-ribityllumazine by condensation of 5-amino-6-(D-ribitylamino)uracil with 3,4-dihydroxy-2-butanone 4-phosphate. This is the penultimate step in the biosynthesis of riboflavin. This is 6,7-dimethyl-8-ribityllumazine synthase from Serratia proteamaculans (strain 568).